Consider the following 244-residue polypeptide: Anti-H(O) lectin 1 (244 aa).

Asn113 and Asn117 each carry an N-linked (GlcNAc...) asparagine glycan. Mn(2+) is bound by residues Glu127 and Asp129. Ca(2+)-binding residues include Asp129, Tyr131, Asn137, and Asp142. Mn(2+) is bound by residues Asp142 and His145.

Belongs to the leguminous lectin family. Homotetramer.

Functionally, di-N-acetylchitobiose-binding anti-H(O) lectin. The chain is Anti-H(O) lectin 1 from Cytisophyllum sessilifolium (Sessile-leaved cytisus).